We begin with the raw amino-acid sequence, 104 residues long: Large ribosomal subunit protein bL21c (104 aa).

This sequence belongs to the bacterial ribosomal protein bL21 family. In terms of assembly, part of the 50S ribosomal subunit.

It localises to the plastid. The protein resides in the chloroplast. In terms of biological role, this protein binds to 23S rRNA. The chain is Large ribosomal subunit protein bL21c from Guillardia theta (Cryptophyte).